We begin with the raw amino-acid sequence, 208 residues long: MKVIEVKHPLVKHKLGLMREADISTKRFRELAKEVGSLLTYEATSDFETEKVTIDGWNGPVEVDQIKGKKVTVVPILRAGLGMMDGVLEHMPSARVSVVGIYRDEETLQPVPYFQKIVSNIDERLALIVDPMLATGGSMIATIDLLKQKGCKQIKVIVLVAAPEGLAALQAAHDDVEVYCASIDQGLNEKGYIIPGLGDAGDKIFGTK.

5-phospho-alpha-D-ribose 1-diphosphate contacts are provided by residues arginine 78, arginine 103, and 130–138; that span reads DPMLATGGS. Uracil-binding positions include isoleucine 193 and 198–200; that span reads GDA. A 5-phospho-alpha-D-ribose 1-diphosphate-binding site is contributed by aspartate 199.

Belongs to the UPRTase family. Requires Mg(2+) as cofactor.

It carries out the reaction UMP + diphosphate = 5-phospho-alpha-D-ribose 1-diphosphate + uracil. Its pathway is pyrimidine metabolism; UMP biosynthesis via salvage pathway; UMP from uracil: step 1/1. Its activity is regulated as follows. Allosterically activated by GTP. Catalyzes the conversion of uracil and 5-phospho-alpha-D-ribose 1-diphosphate (PRPP) to UMP and diphosphate. This chain is Uracil phosphoribosyltransferase, found in Tolumonas auensis (strain DSM 9187 / NBRC 110442 / TA 4).